The primary structure comprises 371 residues: 4-hydroxyphenylpyruvate dioxygenase-like protein (371 aa).

2 VOC domains span residues 7-135 (RLCH…LLQR) and 160-328 (HVDH…VFTK). His163, His258, and Glu339 together coordinate Fe cation.

It belongs to the 4HPPD family. Fe cation serves as cofactor.

The protein localises to the mitochondrion. The catalysed reaction is 3-(4-hydroxyphenyl)pyruvate + O2 = (S)-4-hydroxymandelate + CO2. Functionally, iron-dependent dioxygenase that catalyzes the conversion of 4-hydroxyphenylpyruvate (4-HPPA) to 4-hydroxymandelate (4-HMA) in the mitochondria, one of the steps in the biosynthesis of coenzyme Q10 from tyrosine. The polypeptide is 4-hydroxyphenylpyruvate dioxygenase-like protein (Mus musculus (Mouse)).